Here is a 296-residue protein sequence, read N- to C-terminus: Nucleotide-binding protein MGAS2096_Spy0550 (296 aa).

Residue 13–20 coordinates ATP; that stretch reads GMSGAGKT. A GTP-binding site is contributed by 63 to 66; it reads DMRS.

The protein belongs to the RapZ-like family.

Displays ATPase and GTPase activities. This Streptococcus pyogenes serotype M12 (strain MGAS2096) protein is Nucleotide-binding protein MGAS2096_Spy0550.